A 152-amino-acid polypeptide reads, in one-letter code: 6,7-dimethyl-8-ribityllumazine synthase (152 aa).

5-amino-6-(D-ribitylamino)uracil is bound by residues F24, S56–E58, and V80–V82. Residue E85–T86 coordinates (2S)-2-hydroxy-3-oxobutyl phosphate. The active-site Proton donor is the H88. 5-amino-6-(D-ribitylamino)uracil is bound at residue F113. R127 serves as a coordination point for (2S)-2-hydroxy-3-oxobutyl phosphate.

Belongs to the DMRL synthase family.

The enzyme catalyses (2S)-2-hydroxy-3-oxobutyl phosphate + 5-amino-6-(D-ribitylamino)uracil = 6,7-dimethyl-8-(1-D-ribityl)lumazine + phosphate + 2 H2O + H(+). It participates in cofactor biosynthesis; riboflavin biosynthesis; riboflavin from 2-hydroxy-3-oxobutyl phosphate and 5-amino-6-(D-ribitylamino)uracil: step 1/2. Catalyzes the formation of 6,7-dimethyl-8-ribityllumazine by condensation of 5-amino-6-(D-ribitylamino)uracil with 3,4-dihydroxy-2-butanone 4-phosphate. This is the penultimate step in the biosynthesis of riboflavin. The protein is 6,7-dimethyl-8-ribityllumazine synthase of Thermococcus onnurineus (strain NA1).